Here is a 199-residue protein sequence, read N- to C-terminus: Hematopoietic prostaglandin D synthase (199 aa).

One can recognise a GST N-terminal domain in the interval 2–79; the sequence is PNYKLLYFNM…YLTKNTDLAG (78 aa). Glutathione is bound by residues tyrosine 8, arginine 14, tryptophan 39, 49–51, and 63–64; these read GKI and QS. The GST C-terminal domain maps to 81-199; sequence TALEQCQADA…WILKRPQTKL (119 aa).

It belongs to the GST superfamily. Sigma family. Homodimer. Requires glutathione as cofactor. In terms of tissue distribution, expressed in skin and oviduct.

Its subcellular location is the cytoplasm. The enzyme catalyses prostaglandin H2 = prostaglandin D2. It carries out the reaction RX + glutathione = an S-substituted glutathione + a halide anion + H(+). The catalysed reaction is 2-glyceryl-prostaglandin H2 = 2-glyceryl-prostaglandin D2. Functionally, bifunctional enzyme which catalyzes both the conversion of PGH2 to PGD2, a prostaglandin involved in smooth muscle contraction/relaxation and a potent inhibitor of platelet aggregation, and the conjugation of glutathione with a wide range of aryl halides and organic isothiocyanates. Also exhibits low glutathione-peroxidase activity. The polypeptide is Hematopoietic prostaglandin D synthase (Mus musculus (Mouse)).